A 215-amino-acid chain; its full sequence is uncharacterized protein (215 aa).

The first 29 residues, 1 to 29 (MDKVQSGFLILFLFLMECQLHLCLPYADG), serve as a signal peptide directing secretion. At 30–100 (LHPTGNITGL…IIRHRPALVK (71 aa)) the chain is on the extracellular side. The helical transmembrane segment at 101 to 121 (VILISSVAFSIALICGMAISY) threads the bilayer. The Cytoplasmic segment spans residues 122–215 (MIYRLAQAEE…ASHNGKMEDL (94 aa)). The interval 191–215 (LKEEQNSVTENKTKNASHNGKMEDL) is disordered. A compositionally biased stretch (polar residues) spans 196-208 (NSVTENKTKNASH).

Its subcellular location is the membrane. This is an uncharacterized protein from Homo sapiens (Human).